We begin with the raw amino-acid sequence, 364 residues long: DNA replication and repair protein RecF (364 aa).

Residue 30–37 (GLNAQGKS) participates in ATP binding.

The protein belongs to the RecF family.

It localises to the cytoplasm. Its function is as follows. The RecF protein is involved in DNA metabolism; it is required for DNA replication and normal SOS inducibility. RecF binds preferentially to single-stranded, linear DNA. It also seems to bind ATP. This chain is DNA replication and repair protein RecF, found in Caldanaerobacter subterraneus subsp. tengcongensis (strain DSM 15242 / JCM 11007 / NBRC 100824 / MB4) (Thermoanaerobacter tengcongensis).